The following is a 370-amino-acid chain: Tomoregulin-1 (370 aa).

The N-terminal stretch at 1–36 is a signal peptide; the sequence is MDGLHPASWMLLLGSLAFWSASSLLLFSLALPGARA. Over 37-320 the chain is Extracellular; it reads SNQLLSECHN…VPSRQKLTHV (284 aa). A glycan (N-linked (GlcNAc...) asparagine) is linked at asparagine 53. 2 consecutive Kazal-like domains span residues 88–135 and 179–227; these read ICQF…PCFS and VCNI…SCIE. 9 disulfide bridges follow: cysteine 89–cysteine 119, cysteine 93–cysteine 112, cysteine 101–cysteine 133, cysteine 180–cysteine 211, cysteine 184–cysteine 204, cysteine 193–cysteine 225, cysteine 265–cysteine 278, cysteine 273–cysteine 289, and cysteine 291–cysteine 300. The EGF-like domain maps to 261-301; the sequence is NYIPCSENYNGYCVHGKCELSYSSQKASCRCDSGYTGQYCD. A helical membrane pass occupies residues 321–341; sequence LIAAIIGAVQIAIIVAIVMCI. The Cytoplasmic portion of the chain corresponds to 342 to 370; the sequence is TRKCPKNNRGRRQKQNLGHFSSDTSSRMV. Positions 349-370 are disordered; it reads NRGRRQKQNLGHFSSDTSSRMV. Residues 356–370 show a composition bias toward polar residues; the sequence is QNLGHFSSDTSSRMV.

This sequence belongs to the tomoregulin family. Interacts with cripto. Expressed at highest levels in brain, and at lower levels in neuroendocrine tissues. Present in neurons from the diencephalon (at protein level).

The protein localises to the cell membrane. Functionally, inhibits nodal/nr-1 and bmp signaling during neural patterning through interaction with cripto. The protein is Tomoregulin-1 (tmeff1) of Xenopus laevis (African clawed frog).